Here is a 350-residue protein sequence, read N- to C-terminus: Glycosyltransferase 8 domain-containing protein 2 (350 aa).

Residues 1-6 lie on the Cytoplasmic side of the membrane; that stretch reads MALLRK. A helical; Signal-anchor for type II membrane protein membrane pass occupies residues 7-24; sequence INQVLLFLLIVTLCGILY. At 25-349 the chain is on the lumenal side; sequence KKVHKGTMLR…AGIFKLHHPN (325 aa). A glycan (N-linked (GlcNAc...) asparagine) is linked at N234.

It belongs to the glycosyltransferase 8 family.

It localises to the membrane. In Bos taurus (Bovine), this protein is Glycosyltransferase 8 domain-containing protein 2 (GLT8D2).